The primary structure comprises 151 residues: Transcriptional regulator MraZ (151 aa).

2 consecutive SpoVT-AbrB domains span residues 7–53 and 82–125; these read EYDC…SQTE and INEV…SPDL.

It belongs to the MraZ family. As to quaternary structure, forms oligomers.

Its subcellular location is the cytoplasm. The protein localises to the nucleoid. The protein is Transcriptional regulator MraZ of Cytophaga hutchinsonii (strain ATCC 33406 / DSM 1761 / CIP 103989 / NBRC 15051 / NCIMB 9469 / D465).